Consider the following 92-residue polypeptide: Small ribosomal subunit protein uS19c (92 aa).

It belongs to the universal ribosomal protein uS19 family.

The protein resides in the plastid. It is found in the chloroplast. In terms of biological role, protein S19 forms a complex with S13 that binds strongly to the 16S ribosomal RNA. The protein is Small ribosomal subunit protein uS19c of Daucus carota (Wild carrot).